A 355-amino-acid chain; its full sequence is Peptide chain release factor 1 (355 aa).

Residue glutamine 233 is modified to N5-methylglutamine.

It belongs to the prokaryotic/mitochondrial release factor family. Methylated by PrmC. Methylation increases the termination efficiency of RF1.

It is found in the cytoplasm. Peptide chain release factor 1 directs the termination of translation in response to the peptide chain termination codons UAG and UAA. This Amoebophilus asiaticus (strain 5a2) protein is Peptide chain release factor 1.